The sequence spans 726 residues: Catalase-peroxidase (726 aa).

Residues 93–216 constitute a cross-link (tryptophyl-tyrosyl-methioninium (Trp-Tyr) (with M-242)); sequence WHSAGTYRVH…LAAVQMGLIY (124 aa). Residue His-94 is the Proton acceptor of the active site. Residues 216–242 constitute a cross-link (tryptophyl-tyrosyl-methioninium (Tyr-Met) (with W-93)); it reads YVNPEGPNGNPDPVAAAVDIRETFTRM. His-257 provides a ligand contact to heme b. The tract at residues 471-490 is disordered; it reads GSDKRGGANGARIRLSPQKD.

The protein belongs to the peroxidase family. Peroxidase/catalase subfamily. In terms of assembly, homodimer or homotetramer. It depends on heme b as a cofactor. In terms of processing, formation of the three residue Trp-Tyr-Met cross-link is important for the catalase, but not the peroxidase activity of the enzyme.

The enzyme catalyses H2O2 + AH2 = A + 2 H2O. The catalysed reaction is 2 H2O2 = O2 + 2 H2O. In terms of biological role, bifunctional enzyme with both catalase and broad-spectrum peroxidase activity. The protein is Catalase-peroxidase of Methylacidiphilum infernorum (isolate V4) (Methylokorus infernorum (strain V4)).